A 125-amino-acid polypeptide reads, in one-letter code: Large ribosomal subunit protein bL12 (125 aa).

Belongs to the bacterial ribosomal protein bL12 family. In terms of assembly, homodimer. Part of the ribosomal stalk of the 50S ribosomal subunit. Forms a multimeric L10(L12)X complex, where L10 forms an elongated spine to which 2 to 4 L12 dimers bind in a sequential fashion. Binds GTP-bound translation factors.

Functionally, forms part of the ribosomal stalk which helps the ribosome interact with GTP-bound translation factors. Is thus essential for accurate translation. This is Large ribosomal subunit protein bL12 from Endomicrobium trichonymphae.